The sequence spans 522 residues: uncharacterized protein (522 aa).

Positions 1-11 are enriched in low complexity; it reads MSSITSRVSSR. A disordered region spans residues 1–20; that stretch reads MSSITSRVSSRSSHELTEKK. Helical transmembrane passes span 69-89, 116-136, 141-161, 173-193, 204-224, 236-256, 303-323, 338-358, 367-387, 396-416, 428-448, and 462-482; these read VLWKIDLVMMPVMCITYMIQY, SMTTLFYAGYLVAQYPAAILM, LSYFIFCNVFLWSAMVCLMAA, FLAGIFEASITPAFINITAMW, LCWYAFNGIAQIIGSILSYGL, YVFIVIGLMSLGWGVVFVFIP, VIMITLFTGVCMITNGIGVFS, AVLNMPLGAIEVAAMFISGVL, LLIGVFMNCLTLAGCLMIWKI, LVGVWFTMWVPASSALLLSLI, VTSATVFVFYSVGNIVSPQLF, and AMIVSLCIIIAIAFVLTGYYI.

Belongs to the major facilitator superfamily. Allantoate permease family.

It is found in the endoplasmic reticulum. It localises to the membrane. This is an uncharacterized protein from Schizosaccharomyces pombe (strain 972 / ATCC 24843) (Fission yeast).